Reading from the N-terminus, the 405-residue chain is MGDKAGTRVFKKSSPNCKVTVYLGKRDFVDHLDQVDPVDGVILVDPDYLKERKVFVTLTCAFRYGREDLDVLGLSFRKDLYISTFQAFPPIAEERKANSRLQERLLKKLGQQAHPFYFTIPQNLPCSVTLQPGPEDTGKACGVDFEIRAFCAKSIEEKIHKRNSVRLVIRKVQYAPEKPGPQPMVETTRSFLMSDRSLHLEASLDKELYYHGEPISVNVHVTNNSTKTVKRVKISVRQYADICLFSTAQYKCPVAQVEADDQVSSSSTFCKVYTLTPTLDKNREKRGLALDGKLKHEDTNLASSTIVKDVTNKEVLGILVSYRVKVKLVISRGGDVSVELPFVLMHPKPTELPISRPHSAVPESDPPIDTNLIEFESNSFSQDDDFVFEDFARLRLKGMADDEDC.

This sequence belongs to the arrestin family.

It localises to the cytoplasm. The protein is Arrestin red cell isoform 2 of Oncorhynchus mykiss (Rainbow trout).